We begin with the raw amino-acid sequence, 165 residues long: Phosphopantetheine adenylyltransferase (165 aa).

Ser9 serves as a coordination point for substrate. ATP contacts are provided by residues 9–10 (SF) and His17. Residues Lys41, Leu73, and Lys87 each coordinate substrate. ATP contacts are provided by residues 88 to 90 (GLR), Glu98, and 122 to 128 (YSFLSSS).

Belongs to the bacterial CoaD family. Homohexamer. The cofactor is Mg(2+).

The protein localises to the cytoplasm. It carries out the reaction (R)-4'-phosphopantetheine + ATP + H(+) = 3'-dephospho-CoA + diphosphate. Its pathway is cofactor biosynthesis; coenzyme A biosynthesis; CoA from (R)-pantothenate: step 4/5. Reversibly transfers an adenylyl group from ATP to 4'-phosphopantetheine, yielding dephospho-CoA (dPCoA) and pyrophosphate. This is Phosphopantetheine adenylyltransferase from Acidothermus cellulolyticus (strain ATCC 43068 / DSM 8971 / 11B).